A 294-amino-acid chain; its full sequence is Mitochondrial substrate carrier family protein ucpB (294 aa).

At M1–K10 the chain is on the mitochondrial intermembrane side. Solcar repeat units follow at residues I9 to Y93, T101 to M187, and D197 to V288. A helical transmembrane segment spans residues F11 to L31. Residues K32–K67 lie on the Mitochondrial matrix side of the membrane. The chain crosses the membrane as a helical span at residues G68 to D88. The Mitochondrial intermembrane segment spans residues V89–K106. Residues V107 to I127 form a helical membrane-spanning segment. The Mitochondrial matrix portion of the chain corresponds to K128–K161. The chain crosses the membrane as a helical span at residues G162–D182. Topologically, residues H183–G192 are mitochondrial intermembrane. Residues I193–A213 traverse the membrane as a helical segment. The Mitochondrial matrix portion of the chain corresponds to S214–N267. Residues W268–L285 form a helical membrane-spanning segment. Residues R286–I294 are Mitochondrial intermembrane-facing.

It belongs to the mitochondrial carrier (TC 2.A.29) family.

The protein resides in the mitochondrion inner membrane. Functionally, mitochondrial solute carriers shuttle metabolites, nucleotides, and cofactors through the mitochondrial inner membrane. The protein is Mitochondrial substrate carrier family protein ucpB (ucpB) of Dictyostelium discoideum (Social amoeba).